The following is a 268-amino-acid chain: NAC domain-containing protein 41 (268 aa).

Residues 15–160 (LPPGFRFHPT…NWVLCRVFLK (146 aa)) form the NAC domain. A DNA-binding region spans residues 109-166 (VGMKKTLVFYKGKPPNGTRTNWVLHEYRLVDSQQDSLYGQNMNWVLCRVFLKKRSNSN). Residues 166 to 190 (NSKRKEDEKEEVENEKETETERERE) are disordered. Basic and acidic residues predominate over residues 180 to 190 (EKETETERERE).

It localises to the nucleus. Functionally, transcription activator of the mannan synthase CSLA9. Recognizes and binds to DNA-specific sequence of CSLA9 promoter. In Arabidopsis thaliana (Mouse-ear cress), this protein is NAC domain-containing protein 41.